The following is a 262-amino-acid chain: uncharacterized protein (262 aa).

Residues histidine 7, histidine 9, glutamate 98, histidine 138, histidine 162, and aspartate 212 each coordinate a divalent metal cation.

Belongs to the metallo-dependent hydrolases superfamily. TatD-type hydrolase family. A divalent metal cation is required as a cofactor.

This is an uncharacterized protein from Haemophilus influenzae (strain ATCC 51907 / DSM 11121 / KW20 / Rd).